The following is a 413-amino-acid chain: Synaptosomal-associated protein 47 (413 aa).

One can recognise a t-SNARE coiled-coil homology 1 domain in the interval 109–171; that stretch reads AANIPSHVTR…DVADRLLTEL (63 aa). Positions 321-342 are disordered; the sequence is RHAASRPKGCTPHRELPTGGQE. The t-SNARE coiled-coil homology 2 domain occupies 350–412; it reads KNLPLFSEGE…DKQNRRMRKL (63 aa).

It belongs to the SVAP1 family. Associates with the BLOC-1 complex. Interacts with BLOC1S6. Forms a complex containing SNAP47, VAMP2 and STX1A. As to expression, ubiquitously expressed with the most abundant expression in the brain. In brain, most highly expressed in the glomerular layer of the olfactory bulb, the cortex, striatum, hippocampus, and colliculi (at protein level).

The protein localises to the endomembrane system. The protein resides in the cytoplasm. It localises to the perinuclear region. Its function is as follows. May play a role in intracellular membrane fusion. This is Synaptosomal-associated protein 47 (Snap47) from Mus musculus (Mouse).